The chain runs to 320 residues: Flavonol 4'-sulfotransferase (320 aa).

69 to 74 (KSGTTW) is a binding site for 3'-phosphoadenylyl sulfate. The Proton acceptor role is filled by His-129. Residues Arg-151, Ser-159, Tyr-217, and 285-287 (RKA) contribute to the 3'-phosphoadenylyl sulfate site.

It belongs to the sulfotransferase 1 family. Highest in shoot tips and lowest in mature leaves and roots.

Its subcellular location is the cytoplasm. The enzyme catalyses quercetin 3-sulfate + 3'-phosphoadenylyl sulfate = quercetin 3,4'-bissulfate + adenosine 3',5'-bisphosphate + H(+). With respect to regulation, no requirement for divalent cations and insensitive to p-chloromercuribenzoate, iodoacetate, or iodoacetamide. In terms of biological role, sulfotransferase that utilizes 3'-phospho-5'-adenylyl sulfate (PAPS) as sulfonate donor to catalyze the sulfate conjugation of quercetin 3-sulfate &gt; kaempferol 3-sulfate &gt; isorhamnetin 3-sulfate &gt; patuletin 3-sulfate, but not tamarixetin 3-sulfate. O-sulfation of position 4' of flavonol. May play a role in auxin transport. The chain is Flavonol 4'-sulfotransferase from Flaveria chlorifolia (Clasping yellowtops).